The following is a 198-amino-acid chain: Recombination protein RecR (198 aa).

The segment at 57–72 adopts a C4-type zinc-finger fold; it reads CTVCGHITDTDPCYIC. The 96-residue stretch at 80–175 folds into the Toprim domain; sequence TTICVVQDPK…KVTRIAHGLP (96 aa).

Belongs to the RecR family.

Its function is as follows. May play a role in DNA repair. It seems to be involved in an RecBC-independent recombinational process of DNA repair. It may act with RecF and RecO. This chain is Recombination protein RecR, found in Geobacillus sp. (strain WCH70).